The primary structure comprises 231 residues: Lipoprotein-releasing system ATP-binding protein LolD (231 aa).

Positions 6 to 231 (LQVQAVSKSY…YLQAVAEHAQ (226 aa)) constitute an ABC transporter domain. 42–49 (GTSGSGKS) lines the ATP pocket.

It belongs to the ABC transporter superfamily. Lipoprotein translocase (TC 3.A.1.125) family. In terms of assembly, the complex is composed of two ATP-binding proteins (LolD) and two transmembrane proteins (LolC and LolE).

Its subcellular location is the cell inner membrane. Functionally, part of the ABC transporter complex LolCDE involved in the translocation of mature outer membrane-directed lipoproteins, from the inner membrane to the periplasmic chaperone, LolA. Responsible for the formation of the LolA-lipoprotein complex in an ATP-dependent manner. In Shewanella sp. (strain MR-7), this protein is Lipoprotein-releasing system ATP-binding protein LolD.